Reading from the N-terminus, the 343-residue chain is Sulfate/thiosulfate import ATP-binding protein CysA (343 aa).

Positions 3–237 constitute an ABC transporter domain; that stretch reads IRISHLRKQF…PASPFVYSFV (235 aa). 35–42 serves as a coordination point for ATP; the sequence is GPSGSGKT.

It belongs to the ABC transporter superfamily. Sulfate/tungstate importer (TC 3.A.1.6) family. As to quaternary structure, the complex is composed of two ATP-binding proteins (CysA), two transmembrane proteins (CysT and CysW) and a solute-binding protein (CysP).

The protein localises to the cell inner membrane. The catalysed reaction is sulfate(out) + ATP + H2O = sulfate(in) + ADP + phosphate + H(+). The enzyme catalyses thiosulfate(out) + ATP + H2O = thiosulfate(in) + ADP + phosphate + H(+). Part of the ABC transporter complex CysAWTP involved in sulfate/thiosulfate import. Responsible for energy coupling to the transport system. The chain is Sulfate/thiosulfate import ATP-binding protein CysA from Xanthomonas campestris pv. campestris (strain ATCC 33913 / DSM 3586 / NCPPB 528 / LMG 568 / P 25).